Reading from the N-terminus, the 234-residue chain is Orotidine 5'-phosphate decarboxylase (234 aa).

Substrate is bound by residues D14, K36, 63 to 72 (DLKFHDIPNT), T123, R184, Q193, G213, and R214. The active-site Proton donor is the K65.

It belongs to the OMP decarboxylase family. Type 1 subfamily. As to quaternary structure, homodimer.

It catalyses the reaction orotidine 5'-phosphate + H(+) = UMP + CO2. It participates in pyrimidine metabolism; UMP biosynthesis via de novo pathway; UMP from orotate: step 2/2. In terms of biological role, catalyzes the decarboxylation of orotidine 5'-monophosphate (OMP) to uridine 5'-monophosphate (UMP). This chain is Orotidine 5'-phosphate decarboxylase, found in Pseudoalteromonas translucida (strain TAC 125).